The following is a 302-amino-acid chain: Lipoyl synthase (302 aa).

[4Fe-4S] cluster is bound by residues C44, C49, C55, C70, C74, C77, and S283. The region spanning 56-272 (WSKKHATVMI…ARVAKSKGFL (217 aa)) is the Radical SAM core domain.

This sequence belongs to the radical SAM superfamily. Lipoyl synthase family. [4Fe-4S] cluster serves as cofactor.

It is found in the cytoplasm. The catalysed reaction is [[Fe-S] cluster scaffold protein carrying a second [4Fe-4S](2+) cluster] + N(6)-octanoyl-L-lysyl-[protein] + 2 oxidized [2Fe-2S]-[ferredoxin] + 2 S-adenosyl-L-methionine + 4 H(+) = [[Fe-S] cluster scaffold protein] + N(6)-[(R)-dihydrolipoyl]-L-lysyl-[protein] + 4 Fe(3+) + 2 hydrogen sulfide + 2 5'-deoxyadenosine + 2 L-methionine + 2 reduced [2Fe-2S]-[ferredoxin]. It participates in protein modification; protein lipoylation via endogenous pathway; protein N(6)-(lipoyl)lysine from octanoyl-[acyl-carrier-protein]: step 2/2. In terms of biological role, catalyzes the radical-mediated insertion of two sulfur atoms into the C-6 and C-8 positions of the octanoyl moiety bound to the lipoyl domains of lipoate-dependent enzymes, thereby converting the octanoylated domains into lipoylated derivatives. This Orientia tsutsugamushi (strain Ikeda) (Rickettsia tsutsugamushi) protein is Lipoyl synthase.